The sequence spans 657 residues: THO complex subunit 1 (657 aa).

Residue M1 is modified to N-acetylmethionine. S2 is subject to Phosphoserine. At T4 the chain carries Phosphothreonine. K31 participates in a covalent cross-link: Glycyl lysine isopeptide (Lys-Gly) (interchain with G-Cter in SUMO2). K133 is modified (N6-acetyllysine). A dock domain; interaction with THOC2 region spans residues 133–167 (KNYLLRMCNDLLRRLSKSQNTVFCGRIQLFLARLF). Positions 194–222 (QESTLGQKHTEDREEGMDVEEGEMGDEEA) are disordered. Over residues 206–222 (REEGMDVEEGEMGDEEA) the composition is skewed to acidic residues. The segment at 227–397 (SIPIDYNLYR…WNSWKNEGCP (171 aa)) is dock domain; interaction with THOC2. Residue K300 is modified to N6-acetyllysine. Residue K408 forms a Glycyl lysine isopeptide (Lys-Gly) (interchain with G-Cter in SUMO2) linkage. Positions 414 to 430 (RKRTAPEDFLGKGPTKK) match the Nuclear localization signal motif. Positions 533 to 569 (LPPPSEEIKTGEDEDEEDNDALLKENESPDVRRDKPV) are disordered. S537 bears the Phosphoserine mark. Position 542 is a phosphothreonine (T542). Basic and acidic residues predominate over residues 553 to 569 (ALLKENESPDVRRDKPV). Position 560 is a phosphoserine (S560). The Death domain occupies 570–653 (TGEQIEVFAN…DLAESLTNDN (84 aa)). Residue K580 forms a Glycyl lysine isopeptide (Lys-Gly) (interchain with G-Cter in SUMO2) linkage. A Glycyl lysine isopeptide (Lys-Gly) (interchain with G-Cter in SUMO1); alternate cross-link involves residue K595. K595 participates in a covalent cross-link: Glycyl lysine isopeptide (Lys-Gly) (interchain with G-Cter in SUMO2); alternate.

Belongs to the THOC1 family. Component of the THO subcomplex, which is composed of THOC1, THOC2, THOC3, THOC5, THOC6 and THOC7. The THO subcomplex interacts with DDX39B to form the THO-DDX39B complex which multimerizes into a 28-subunit tetrameric assembly. Component of the transcription/export (TREX) complex at least composed of ALYREF/THOC4, DDX39B, SARNP/CIP29, CHTOP and the THO subcomplex; in the complex interacts with THOC2, THOC5 and THOC7. TREX seems to have a dynamic structure involving ATP-dependent remodeling. Binds to the hypophosphorylated form of RB1. Interacts with RNA polymerase II. Interacts with LUZP4. In terms of processing, expression is altered specifically during apoptosis and is accompanied by the appearance of novel forms with smaller apparent molecular mass. Polyubiquitinated, leading to proteasomal degradation; probably involves NEDD4. As to expression, ubiquitous. Expressed in various cancer cell lines. Expressed at very low levels in normal breast epithelial cells and highly expressed in breast tumors. Expression is strongly associated with an aggressive phenotype of breast tumors and expression correlates with tumor size and the metastatic state of the tumor progression.

Its subcellular location is the nucleus speckle. It localises to the nucleus. It is found in the nucleoplasm. The protein resides in the nucleus matrix. The protein localises to the cytoplasm. Its function is as follows. Component of the THO subcomplex of the TREX complex which is thought to couple mRNA transcription, processing and nuclear export, and which specifically associates with spliced mRNA and not with unspliced pre-mRNA. Required for efficient export of polyadenylated RNA. The THOC1-THOC2-THOC3 core complex alone is sufficient to bind export factor NXF1-NXT1 and promote ATPase activity of DDX39B/UAP56. TREX is recruited to spliced mRNAs by a transcription-independent mechanism, binds to mRNA upstream of the exon-junction complex (EJC) and is recruited in a splicing- and cap-dependent manner to a region near the 5' end of the mRNA where it functions in mRNA export to the cytoplasm via the TAP/NXF1 pathway. Regulates transcriptional elongation of a subset of genes. Involved in genome stability by preventing co-transcriptional R-loop formation. May play a role in hair cell formation, hence may be involved in hearing. Participates in an apoptotic pathway which is characterized by activation of caspase-6, increases in the expression of BAK1 and BCL2L1 and activation of NF-kappa-B. This pathway does not require p53/TP53, nor does the presence of p53/TP53 affect the efficiency of cell killing. Activates a G2/M cell cycle checkpoint prior to the onset of apoptosis. Apoptosis is inhibited by association with RB1. In terms of biological role, (Microbial infection) The TREX complex is essential for the export of Kaposi's sarcoma-associated herpesvirus (KSHV) intronless mRNAs and infectious virus production. The polypeptide is THO complex subunit 1 (THOC1) (Homo sapiens (Human)).